The sequence spans 269 residues: Mitochondrial acidic protein mam33 (269 aa).

The protein belongs to the MAM33 family.

The protein resides in the cytoplasm. The protein localises to the mitochondrion matrix. This is Mitochondrial acidic protein mam33 from Schizosaccharomyces pombe (strain 972 / ATCC 24843) (Fission yeast).